A 2222-amino-acid polypeptide reads, in one-letter code: Voltage-dependent R-type calcium channel subunit alpha-1E (2222 aa).

The Cytoplasmic segment spans residues 1–40 (MALYNPIPVRQNCFTVNRSLFIFGEDNIVRKYAKKLIDWP). Residues 27–305 (NIVRKYAKKL…LVLGVLSGEF (279 aa)) form an I repeat. A helical transmembrane segment spans residues 41–59 (PFEYMILATIIANCIVLAL). Topologically, residues 60–78 (EQHLPEDDKTPMSRRLEKT) are extracellular. Residues 79-97 (EPYFIGIFCFEAGIKIVAL) form a helical membrane-spanning segment. Residues 98 to 109 (GFIFHKGSYLRN) are Cytoplasmic-facing. The chain crosses the membrane as a helical span at residues 110 to 124 (GWNVMDFIVVLSGIL). Topologically, residues 125-136 (ATAGTHFNTHVD) are extracellular. Residues 137 to 156 (LRTLRAVRVLRPLKLVSGIP) traverse the membrane as a helical segment. The Cytoplasmic segment spans residues 157–174 (SLQIVLKSIMKAMVPLLQ). The helical transmembrane segment at 175–195 (IGLLLFFAILMFAIIGLEFYS) threads the bilayer. Topologically, residues 196–277 (GKLHRACFMN…NTNDALGATW (82 aa)) are extracellular. N205 is a glycosylation site (N-linked (GlcNAc...) asparagine). Residues 278-301 (NWLYFIPLIIIGSFFVLNLVLGVL) form a helical membrane-spanning segment. Over 302 to 427 (SGEFAKERER…ISIRHMVKSQ (126 aa)) the chain is Cytoplasmic. Residues 325–342 (QQIERELNGYRAWIDKAE) are binding to the beta subunit. Position 377 (D377) interacts with Ca(2+). The residue at position 378 (S378) is a Phosphoserine. Residues S379, E381, and C383 each contribute to the Ca(2+) site. A Phosphothreonine modification is found at T391. The stretch at 413-657 (ERLLRISIRH…VFLAIAVDNL (245 aa)) is one II repeat. Residues 428–447 (VFYWIVLSVVALNTACVAIV) form a helical membrane-spanning segment. The Extracellular portion of the chain corresponds to 448 to 460 (HHNQPQWLTHLLY). A helical membrane pass occupies residues 461-480 (YAEFLFLGLFLLEMSLKMYG). Over 481–489 (MGPRLYFHS) the chain is Cytoplasmic. The helical transmembrane segment at 490–508 (SFNCFDFGVTVGSIFEVVW) threads the bilayer. At 509 to 518 (AIFRPGTSFG) the chain is on the extracellular side. The helical transmembrane segment at 519 to 537 (ISVLRALRLLRIFKITKYW) threads the bilayer. Residues 538–556 (ASLRNLVVSLMSSMKSIIS) lie on the Cytoplasmic side of the membrane. A helical transmembrane segment spans residues 557–576 (LLFLLFLFIVVFALLGMQLF). Topologically, residues 577–629 (GGRFNFNDGTPSANFDTFPAAIMTVFQILTGEDWNEVMYNGIRSQGGVSSGMW) are extracellular. A helical membrane pass occupies residues 630 to 654 (SAIYFIVLTLFGNYTLLNVFLAIAV). Over 655–1100 (DNLANAQELT…TNPIRKACHY (446 aa)) the chain is Cytoplasmic. A disordered region spans residues 680–727 (LQKAKEVSPMSAPNMPSIERDRRRRHHMSMWEPRSSHLRERRRRHHMS). A phosphoserine mark is found at S687, S696, S744, S766, and S806. Disordered stretches follow at residues 820–944 (NQRS…VPRG) and 1042–1076 (NKTDGEASPLKEAETKEEEEEVEKKKQKKEKRETG). A compositionally biased stretch (basic residues) spans 864–877 (RHRQSQRRSRHRRV). Low complexity predominate over residues 884-896 (SASASRSRSASQE). S898 is modified (phosphoserine). Composition is skewed to basic and acidic residues over residues 906–935 (DGEKEHEPQSSHRSKEPTIHEEERTQDLRR) and 1044–1055 (TDGEASPLKEAE). S1049 bears the Phosphoserine mark. One copy of the III repeat lies at 1092–1378 (NPIRKACHYI…IFVALIIITF (287 aa)). Residues 1101–1117 (IVNLRYFEMCILLVIAA) traverse the membrane as a helical segment. Topologically, residues 1118-1141 (SSIALAAEDPVLTNSERNKVLRYF) are extracellular. The helical transmembrane segment at 1142-1161 (DYVFTGVFTFEMVIKMIDQG) threads the bilayer. The Cytoplasmic segment spans residues 1162-1169 (LILQDGSY). A helical transmembrane segment spans residues 1170 to 1192 (FRDLWNILDFVVVVGALVAFALA). The Extracellular segment spans residues 1193–1206 (NALGTNKGRDIKTI). Residues 1207 to 1224 (KSLRVLRVLRPLKTIKRL) traverse the membrane as a helical segment. At 1225–1243 (PKLKAVFDCVVTSLKNVFN) the chain is on the cytoplasmic side. Residues 1244-1263 (ILIVYKLFMFIFAVIAVQLF) traverse the membrane as a helical segment. At 1264-1350 (KGKFFYCTDS…RGPSRSNRME (87 aa)) the chain is on the extracellular side. Residues 1351–1374 (MSIFYVVYFVVFPFFFVNIFVALI) traverse the membrane as a helical segment. The Cytoplasmic segment spans residues 1375-1431 (IITFQEQGDKMMEECSLEKNERACIDFAISAKPLTRYMPQNRHTFQYRVWHFVVSPS). The stretch at 1415-1678 (NRHTFQYRVW…LFVAVIMDNF (264 aa)) is one IV repeat. Residues 1432-1450 (FEYTIMAMIALNTVVLMMK) form a helical membrane-spanning segment. Topologically, residues 1451–1467 (YYSAPWTYELALKYLNI) are extracellular. The helical transmembrane segment at 1468-1485 (AFTMVFSLECVLKVIAFG) threads the bilayer. Topologically, residues 1486-1493 (FLNYFRDT) are cytoplasmic. Residues 1494 to 1512 (WNIFDFITVIGSITEIILT) traverse the membrane as a helical segment. The Extracellular segment spans residues 1513-1523 (DSKLVNTSGFN). Residues N1518 and N1523 are each glycosylated (N-linked (GlcNAc...) asparagine). Residues 1524-1542 (MSFLKLFRAARLIKLLRQG) traverse the membrane as a helical segment. The Cytoplasmic portion of the chain corresponds to 1543 to 1561 (YTIRILLWTFVQSFKALPY). Residues 1562–1581 (VCLLIAMLFFIYAIIGMQVF) traverse the membrane as a helical segment. The Extracellular portion of the chain corresponds to 1582-1650 (GNIKLDEESH…NESERCGTDL (69 aa)). A glycan (N-linked (GlcNAc...) asparagine) is linked at N1641. A helical transmembrane segment spans residues 1651-1676 (AYVYFVSFIFFCSFLMLNLFVAVIMD). Residues 1677 to 2222 (NFEYLTRDSS…LSDTEEDDKC (546 aa)) are Cytoplasmic-facing. The EF-hand domain occupies 1691-1726 (HHLDEFVRVWAEYDRAACGRIHYTEMYEMLTLMSPP). D1704, R1710, and E1715 together coordinate Ca(2+). Positions 1970–2135 (SAHRLNSDSG…QQGQHPSPQH (166 aa)) are disordered. Residues 1974–1994 (LNSDSGHKSDTHRSGGRERGR) are compositionally biased toward basic and acidic residues. Residues S2003 and S2022 each carry the phosphoserine modification. Residues 2010 to 2027 (NSEERGTQADWESPERRQ) show a composition bias toward basic and acidic residues. A compositionally biased stretch (low complexity) spans 2046–2061 (SLSESSIPSISDTSTP). Residues 2104–2123 (LASQALESNSACLTESSNSL) show a composition bias toward polar residues. The segment covering 2124 to 2135 (HPQQGQHPSPQH) has biased composition (low complexity).

It belongs to the calcium channel alpha-1 subunit (TC 1.A.1.11) family. CACNA1E subfamily. Interacts with EFHC1. Voltage-dependent calcium channels are multisubunit complexes, consisting of alpha-1, alpha-2, beta and delta subunits in a 1:1:1:1 ratio. The channel activity is directed by the pore-forming and voltage-sensitive alpha-1 subunit. In many cases, this subunit is sufficient to generate voltage-sensitive calcium channel activity. The auxiliary subunits beta and alpha-2/delta linked by a disulfide bridge regulate the channel activity. As to expression, expressed in central nervous system and in insulinoma.

The protein localises to the membrane. The catalysed reaction is Ca(2+)(in) = Ca(2+)(out). Voltage-sensitive calcium channels (VSCC) mediate the entry of calcium ions into excitable cells and are also involved in a variety of calcium-dependent processes, including muscle contraction, hormone or neurotransmitter release, gene expression, cell motility, cell division and cell death. The isoform alpha-1E gives rise to R-type calcium currents. R-type calcium channels belong to the 'high-voltage activated' (HVA) group and are blocked by nickel. They are however insensitive to dihydropyridines (DHP). Calcium channels containing alpha-1E subunit could be involved in the modulation of firing patterns of neurons which is important for information processing. The polypeptide is Voltage-dependent R-type calcium channel subunit alpha-1E (Cacna1e) (Rattus norvegicus (Rat)).